Reading from the N-terminus, the 600-residue chain is MGHVNLPASKRGNPRQWRLLDIVTAAFFGIVLLFFILLFTPLGDSMAASGRQTLLLSTASDPRQRQRLVTLVEAGQHLQPIEYCPAEAVAHMPCEDPRRNSQLSREMNFYRERHCPLPEETPLCLIPPPSGYKIPVPWPESLHKIWHANMPYNKIADRKGHQGWMKREGEYFTFPGGGTMFPGGAGQYIEKLAQYIPLNGGTLRTALDMGCGVASFGGTLLSQGILALSFAPRDSHKSQIQFALERGVPAFVAMLGTRRLPFPAYSFDLMHCSRCLIPFTAYNATYFIEVDRLLRPGGYLVISGPPVQWPKQDKEWADLQAVARALCYELIAVDGNTVIWKKPVGDSCLPSQNEFGLELCDESVPPSDAWYFKLKRCVTRPSSVKGEHALGTISKWPERLTKVPSRAIVMKNGLDVFEADARRWARRVAYYRDSLNLKLKSPTVRNVMDMNAFFGGFAATLASDPVWVMNVIPARKPLTLDVIYDRGLIGVYHDWCEPFSTYPRTYDFIHVSGIESLIKRQDSSKSRCSLVDLMVEMDRILRPEGKVVIRDSPEVLDKVARMAHAVRWSSSIHEKEPESHGREKILIATKSLWKLPSNSH.

Residues 1 to 18 (MGHVNLPASKRGNPRQWR) lie on the Cytoplasmic side of the membrane. The helical; Signal-anchor for type II membrane protein transmembrane segment at 19-39 (LLDIVTAAFFGIVLLFFILLF) threads the bilayer. Over 40–600 (TPLGDSMAAS…SLWKLPSNSH (561 aa)) the chain is Lumenal. The N-linked (GlcNAc...) asparagine glycan is linked to Asn283.

This sequence belongs to the methyltransferase superfamily. As to expression, highly expressed and abundant in suspension-cultured cells, but low levels in seedlings.

It localises to the golgi apparatus membrane. Its pathway is glycan metabolism; pectin biosynthesis. S-adenosyl-L-methionine (SAM)-dependent methyltransferase (MTase) which mediates the methylesterification of the pectin homogalacturonan (HG) and thus regulates cell wall biosynthesis, at least in suspension-cultured cells. This Arabidopsis thaliana (Mouse-ear cress) protein is Probable pectin methyltransferase QUA3.